The chain runs to 81 residues: Photosystem I iron-sulfur center (81 aa).

4Fe-4S ferredoxin-type domains are found at residues 2-31 (SHSV…MVPW) and 37-68 (GQIA…VRVY). Residues C11, C14, C17, C21, C48, C51, C54, and C58 each coordinate [4Fe-4S] cluster.

In terms of assembly, the cyanobacterial PSI reaction center is composed of one copy each of PsaA,B,C,D,E,F,I,J,K,L,M and X, and forms trimeric complexes. It depends on [4Fe-4S] cluster as a cofactor.

The protein localises to the cellular thylakoid membrane. The enzyme catalyses reduced [plastocyanin] + hnu + oxidized [2Fe-2S]-[ferredoxin] = oxidized [plastocyanin] + reduced [2Fe-2S]-[ferredoxin]. Apoprotein for the two 4Fe-4S centers FA and FB of photosystem I (PSI); essential for photochemical activity. FB is the terminal electron acceptor of PSI, donating electrons to ferredoxin. The C-terminus interacts with PsaA/B/D and helps assemble the protein into the PSI complex. Required for binding of PsaD and PsaE to PSI. PSI is a plastocyanin/cytochrome c6-ferredoxin oxidoreductase, converting photonic excitation into a charge separation, which transfers an electron from the donor P700 chlorophyll pair to the spectroscopically characterized acceptors A0, A1, FX, FA and FB in turn. The protein is Photosystem I iron-sulfur center of Prochlorococcus marinus (strain SARG / CCMP1375 / SS120).